A 61-amino-acid polypeptide reads, in one-letter code: MKYTKFEKARIIGARALQIAMGAPVIIDIPKNVIDPVDIATIEFENNVIPITIKRVSKVLN.

Belongs to the archaeal Rpo6/eukaryotic RPB6 RNA polymerase subunit family. As to quaternary structure, part of the RNA polymerase complex.

The protein localises to the cytoplasm. It catalyses the reaction RNA(n) + a ribonucleoside 5'-triphosphate = RNA(n+1) + diphosphate. In terms of biological role, DNA-dependent RNA polymerase (RNAP) catalyzes the transcription of DNA into RNA using the four ribonucleoside triphosphates as substrates. The polypeptide is DNA-directed RNA polymerase subunit Rpo6 (Thermoplasma volcanium (strain ATCC 51530 / DSM 4299 / JCM 9571 / NBRC 15438 / GSS1)).